The chain runs to 161 residues: MSNSSKKHFDLPYRPGVGMMILNADNHIFVGKRIDTKISAWQMPQGGIVPGETPSIAAMREMLEEIGSDKGYIIAESKFWYSYDVPSFLIPKLWNGNFRGQQQRWFLIRFTGNNEDININTSNPEFDQWRWASLDELLSIIIPFKRKLYQAVVKEFESLIQ.

The 143-residue stretch at 12–154 (PYRPGVGMMI…KRKLYQAVVK (143 aa)) folds into the Nudix hydrolase domain. Residues 46–67 (GGIVPGETPSIAAMREMLEEIG) carry the Nudix box motif.

It belongs to the Nudix hydrolase family. RppH subfamily. A divalent metal cation serves as cofactor.

Its function is as follows. Accelerates the degradation of transcripts by removing pyrophosphate from the 5'-end of triphosphorylated RNA, leading to a more labile monophosphorylated state that can stimulate subsequent ribonuclease cleavage. The sequence is that of RNA pyrophosphohydrolase from Rickettsia africae (strain ESF-5).